Reading from the N-terminus, the 360-residue chain is DNA replication and repair protein RecF (360 aa).

30-37 is an ATP binding site; the sequence is GQNGSGKT.

It belongs to the RecF family.

Its subcellular location is the cytoplasm. Its function is as follows. The RecF protein is involved in DNA metabolism; it is required for DNA replication and normal SOS inducibility. RecF binds preferentially to single-stranded, linear DNA. It also seems to bind ATP. In Shewanella sp. (strain MR-4), this protein is DNA replication and repair protein RecF.